Reading from the N-terminus, the 155-residue chain is Ribonuclease H (155 aa).

An RNase H type-1 domain is found at 1 to 142; sequence MLKQVEIFTD…CDELARAAAM (142 aa). Mg(2+) contacts are provided by D10, E48, D70, and D134.

The protein belongs to the RNase H family. In terms of assembly, monomer. Requires Mg(2+) as cofactor.

It is found in the cytoplasm. It catalyses the reaction Endonucleolytic cleavage to 5'-phosphomonoester.. Its function is as follows. Endonuclease that specifically degrades the RNA of RNA-DNA hybrids. The sequence is that of Ribonuclease H from Escherichia fergusonii (strain ATCC 35469 / DSM 13698 / CCUG 18766 / IAM 14443 / JCM 21226 / LMG 7866 / NBRC 102419 / NCTC 12128 / CDC 0568-73).